Here is a 357-residue protein sequence, read N- to C-terminus: UDP-arabinopyranose mutase 1 (357 aa).

V2 is subject to N-acetylvaline. The short motif at 110–112 (DDD) is the DXD motif element. R158 carries an N-linked (Glc...) arginine glycan.

This sequence belongs to the RGP family. As to quaternary structure, heteromers with RGP2, RGP3, RGP4 and RGP5. The cofactor is Mn(2+). It depends on Mg(2+) as a cofactor. Reversibly glycosylated in vitro by UDP-glucose, UDP-xylose and UDP-galactose, but not UDP-mannose. As to expression, predominantly expressed in shoot and root apical meristems. Expressed in epidermal cells of leaves, inflorescence stems and seed coat. Expressed in pollen.

It is found in the cytoplasm. It localises to the cytosol. The protein localises to the golgi apparatus. It catalyses the reaction UDP-beta-L-arabinofuranose = UDP-beta-L-arabinopyranose. Its function is as follows. UDP-L-arabinose mutase involved in the biosynthesis of cell wall non-cellulosic polysaccharides. Catalyzes the interconvertion of UDP-L-arabinopyranose (UDP-Arap) and UDP-L-arabinofuranose (UDP-Araf) in vitro. Preferentially catalyzes the formation of UDP-Arap from UDP-Araf. At thermodynamic equilibrium in vitro the ratio of the pyranose form over the furanose form is 95:5. Is not active on other UDP-sugars (UDP-Gal, UDP-Xyl, UDP-Glc, GDP-Man and GDP-Fuc). Functions redundantly with RGP2 and is essential for proper cell walls and pollen development. Probably involved in the formation of the pectocellulosic cell wall layer intine. Is probably active as heteromer in vivo. In Arabidopsis thaliana (Mouse-ear cress), this protein is UDP-arabinopyranose mutase 1.